The primary structure comprises 227 residues: MSIAVETFGFFMSALGLLMLGVTLPNSYWRVSTVHGNVITTNTIFENLWYSCATDSLGVSNCWDFPSMLALSGYVQGCRALMITAILLGFLGLFLGMVGLRCTNVGNIDLSRKAKLLAIAGAFHILAGACGMVAISWYAVNITTDFFNPLYVGTKYELGSALYLGWSASLLSILGGICVFSTCCCDSKEDPATRVGLPYKPSTVVTARATSDESDVSFGKYGKNAYV.

Position 1 (methionine 1) is a topological domain, cytoplasmic. A helical membrane pass occupies residues 2-24; that stretch reads SIAVETFGFFMSALGLLMLGVTL. Over 25–74 the chain is Extracellular; the sequence is PNSYWRVSTVHGNVITTNTIFENLWYSCATDSLGVSNCWDFPSMLALSGY. Cysteine 52 and cysteine 62 are joined by a disulfide. A helical membrane pass occupies residues 75-99; that stretch reads VQGCRALMITAILLGFLGLFLGMVG. Over 100 to 115 the chain is Cytoplasmic; the sequence is LRCTNVGNIDLSRKAK. Phosphoserine is present on serine 111. Residues 116-140 traverse the membrane as a helical segment; that stretch reads LLAIAGAFHILAGACGMVAISWYAV. Over 141–159 the chain is Extracellular; it reads NITTDFFNPLYVGTKYELG. The segment at 146–147 is important for the formation of tight-junction strand-like structures; sequence FF. A helical transmembrane segment spans residues 160-182; that stretch reads SALYLGWSASLLSILGGICVFST. At 183-227 the chain is on the cytoplasmic side; sequence CCCDSKEDPATRVGLPYKPSTVVTARATSDESDVSFGKYGKNAYV. Phosphoserine is present on residues serine 211, serine 214, and serine 217.

It belongs to the claudin family. As to quaternary structure, can form homo- and heteropolymeric tight junction strands. Palmitoylated. As to expression, detected in kidney, jejunum and colon (at protein level).

It localises to the cell junction. It is found in the tight junction. Its subcellular location is the cell membrane. The enzyme catalyses Na(+)(in) = Na(+)(out). It catalyses the reaction K(+)(in) = K(+)(out). The catalysed reaction is Cs(+)(in) = Cs(+)(out). It carries out the reaction Rb(+)(in) = Rb(+)(out). The enzyme catalyses Li(+)(in) = Li(+)(out). It catalyses the reaction NH4(+)(in) = NH4(+)(out). The catalysed reaction is methylamine(out) = methylamine(in). It carries out the reaction H2O(in) = H2O(out). Its function is as follows. Forms paracellular channels: polymerizes in tight junction strands with cation- and water-selective channels through the strands, conveying epithelial permeability in a process known as paracellular tight junction permeability. In intestinal epithelium, allows for sodium and water fluxes from the peritoneal side to the lumen of the intestine to regulate nutrient absorption and intestinal morphogenesis. The chain is Claudin-15 from Rattus norvegicus (Rat).